Here is a 677-residue protein sequence, read N- to C-terminus: Methionine--tRNA ligase (677 aa).

Residues 15-25 carry the 'HIGH' region motif; sequence PYANGSIHLGH. Zn(2+)-binding residues include Cys-146, Cys-149, Cys-159, and Cys-162. The 'KMSKS' region signature appears at 333–337; that stretch reads KMSKS. An ATP-binding site is contributed by Lys-336. The tRNA-binding domain occupies 575–677; sequence DFAKIDLRVA…DGAKPGQQVK (103 aa).

Belongs to the class-I aminoacyl-tRNA synthetase family. MetG type 1 subfamily. As to quaternary structure, homodimer. Requires Zn(2+) as cofactor.

It is found in the cytoplasm. The catalysed reaction is tRNA(Met) + L-methionine + ATP = L-methionyl-tRNA(Met) + AMP + diphosphate. In terms of biological role, is required not only for elongation of protein synthesis but also for the initiation of all mRNA translation through initiator tRNA(fMet) aminoacylation. The protein is Methionine--tRNA ligase of Salmonella paratyphi A (strain AKU_12601).